The primary structure comprises 69 residues: Large ribosomal subunit protein uL29 (69 aa).

The protein belongs to the universal ribosomal protein uL29 family.

The sequence is that of Large ribosomal subunit protein uL29 from Oenococcus oeni (strain ATCC BAA-331 / PSU-1).